The sequence spans 381 residues: uncharacterized protein (381 aa).

The next 2 membrane-spanning stretches (helical) occupy residues 22 to 42 (GVLL…YLTA) and 246 to 266 (LIPE…LLVA).

Its subcellular location is the cell membrane. This is an uncharacterized protein from Mycobacterium tuberculosis (strain ATCC 25618 / H37Rv).